The following is a 530-amino-acid chain: Arginine--tRNA ligase (530 aa).

A 'HIGH' region motif is present at residues 113–123 (ANPTGPLHIGH).

The protein belongs to the class-I aminoacyl-tRNA synthetase family. Monomer.

It is found in the cytoplasm. It carries out the reaction tRNA(Arg) + L-arginine + ATP = L-arginyl-tRNA(Arg) + AMP + diphosphate. The chain is Arginine--tRNA ligase from Campylobacter jejuni subsp. jejuni serotype O:2 (strain ATCC 700819 / NCTC 11168).